The chain runs to 571 residues: Proline--tRNA ligase (571 aa).

It belongs to the class-II aminoacyl-tRNA synthetase family. ProS type 1 subfamily. Homodimer.

It is found in the cytoplasm. It carries out the reaction tRNA(Pro) + L-proline + ATP = L-prolyl-tRNA(Pro) + AMP + diphosphate. In terms of biological role, catalyzes the attachment of proline to tRNA(Pro) in a two-step reaction: proline is first activated by ATP to form Pro-AMP and then transferred to the acceptor end of tRNA(Pro). As ProRS can inadvertently accommodate and process non-cognate amino acids such as alanine and cysteine, to avoid such errors it has two additional distinct editing activities against alanine. One activity is designated as 'pretransfer' editing and involves the tRNA(Pro)-independent hydrolysis of activated Ala-AMP. The other activity is designated 'posttransfer' editing and involves deacylation of mischarged Ala-tRNA(Pro). The misacylated Cys-tRNA(Pro) is not edited by ProRS. The protein is Proline--tRNA ligase of Glaesserella parasuis serovar 5 (strain SH0165) (Haemophilus parasuis).